Consider the following 623-residue polypeptide: DNA-directed RNA polymerase III subunit rpc3 (623 aa).

Disordered stretches follow at residues 131–164 (RSDA…HVSD), 249–282 (RGVK…DEEN), and 381–412 (SLGP…HGAT). Positions 273–282 (DDGEDEDEEN) are enriched in acidic residues. The leucine-zipper stretch occupies residues 550 to 571 (TYKAMSRCLQRLKFERGRLKDF).

It belongs to the RNA polymerase beta chain family. Component of the RNA polymerase III (Pol III) complex consisting of 17 subunits.

The protein localises to the nucleus. Its function is as follows. DNA-dependent RNA polymerase catalyzes the transcription of DNA into RNA using the four ribonucleoside triphosphates as substrates. Specific core component of RNA polymerase III which synthesizes small RNAs, such as 5S rRNA and tRNAs. This Emericella nidulans (strain FGSC A4 / ATCC 38163 / CBS 112.46 / NRRL 194 / M139) (Aspergillus nidulans) protein is DNA-directed RNA polymerase III subunit rpc3 (rpc82).